The primary structure comprises 292 residues: 33 kDa chaperonin (292 aa).

Intrachain disulfides connect C230–C232 and C263–C266.

Belongs to the HSP33 family. Under oxidizing conditions two disulfide bonds are formed involving the reactive cysteines. Under reducing conditions zinc is bound to the reactive cysteines and the protein is inactive.

The protein resides in the cytoplasm. Its function is as follows. Redox regulated molecular chaperone. Protects both thermally unfolding and oxidatively damaged proteins from irreversible aggregation. Plays an important role in the bacterial defense system toward oxidative stress. This is 33 kDa chaperonin from Escherichia coli O7:K1 (strain IAI39 / ExPEC).